Consider the following 963-residue polypeptide: Protein bicaudal C homolog 1-A (963 aa).

Residues 1 to 48 form a disordered region; that stretch reads MAAQCESIGGDMNQSDPGSNSERSADSPVPGSEDDSPHDPEWREERFR. Over residues 12 to 22 the composition is skewed to polar residues; it reads MNQSDPGSNSE. Basic and acidic residues predominate over residues 35–48; that stretch reads DSPHDPEWREERFR. KH domains lie at 128 to 195 and 280 to 344; these read RVTL…RVRI and PVST…RQYL. A compositionally biased stretch (polar residues) spans 592–601; the sequence is EASRQSNNHS. Disordered stretches follow at residues 592–613, 668–713, and 767–834; these read EASRQSNNHSSAEEVNSKTDPE, ERLL…TSQS, and LRRA…NKSA. Basic and acidic residues-rich tracts occupy residues 602–612 and 683–696; these read SAEEVNSKTDP and VTDKKAPGSERAAE. Residues 784–797 show a composition bias toward low complexity; that stretch reads ENSSLSRSNSREQL. Polar residues predominate over residues 812-824; it reads IDSSQNDYSSSIG. Residues 862-925 form the SAM domain; that stretch reads FKGSDLPELF…LLAISELNKN (64 aa).

This sequence belongs to the BicC family.

In terms of biological role, putative RNA-binding protein. May be involved in regulating gene expression during embryonic development. Seems to be involved in endoderm formation. Ectopic expression results in endoderm formation in the absence of mesoderm induction. In Xenopus laevis (African clawed frog), this protein is Protein bicaudal C homolog 1-A (bicc1-a).